Reading from the N-terminus, the 380-residue chain is Cobalt-precorrin-5B C(1)-methyltransferase (380 aa).

This sequence belongs to the CbiD family.

The catalysed reaction is Co-precorrin-5B + S-adenosyl-L-methionine = Co-precorrin-6A + S-adenosyl-L-homocysteine. The protein operates within cofactor biosynthesis; adenosylcobalamin biosynthesis; cob(II)yrinate a,c-diamide from sirohydrochlorin (anaerobic route): step 6/10. Its function is as follows. Catalyzes the methylation of C-1 in cobalt-precorrin-5B to form cobalt-precorrin-6A. The sequence is that of Cobalt-precorrin-5B C(1)-methyltransferase from Salinispora tropica (strain ATCC BAA-916 / DSM 44818 / JCM 13857 / NBRC 105044 / CNB-440).